The sequence spans 262 residues: MKTFLILALLAIVATTATTAVRVPVPQLQPQNPSQQQPQEQVPLVQQQQFLGQQQPFPPQQPYPQPQPFPSQQPYLQLQPFLQPQLPYSQPQPFRPQQPYPQPQPQYSQPQQPISQQQQQQQQQQQQQQQQQQQIIQQILQQQLIPCMDVVLQQHNIVHGKSQVLQQSTYQLLQELCCQHLWQIPEQSQCQAIHNVVHAIILHQQQKQQQQPSSQVSFQQPLQQYPLGQGSFRPSQQNPQAQGSVQPQQLPQFEEIRNLARK.

An N-terminal signal peptide occupies residues 1 to 20 (MKTFLILALLAIVATTATTA). 3 disordered regions span residues 51-73 (LGQQ…PSQQ), 87-120 (PYSQ…QQQQ), and 225-251 (YPLG…QQLP). Composition is skewed to pro residues over residues 56-71 (PFPP…PFPS) and 93-104 (PFRPQQPYPQPQ). Over residues 105-120 (PQYSQPQQPISQQQQQ) the composition is skewed to low complexity. The span at 232 to 251 (FRPSQQNPQAQGSVQPQQLP) shows a compositional bias: polar residues.

It belongs to the gliadin/glutenin family. In terms of processing, substrate of transglutaminase.

Its function is as follows. Gliadin is the major seed storage protein in wheat. The chain is Alpha/beta-gliadin A-I from Triticum aestivum (Wheat).